We begin with the raw amino-acid sequence, 36 residues long: Photosystem I reaction center subunit VIII (36 aa).

The helical transmembrane segment at 6-28 (LPSIFVPXVGLVFPAIAMASXFL) threads the bilayer.

This sequence belongs to the PsaI family.

It localises to the plastid. Its subcellular location is the chloroplast thylakoid membrane. Functionally, may help in the organization of the PsaL subunit. This chain is Photosystem I reaction center subunit VIII, found in Acorus gramineus (Dwarf sweet flag).